The primary structure comprises 227 residues: Leucyl/phenylalanyl-tRNA--protein transferase (227 aa).

Belongs to the L/F-transferase family.

Its subcellular location is the cytoplasm. It carries out the reaction N-terminal L-lysyl-[protein] + L-leucyl-tRNA(Leu) = N-terminal L-leucyl-L-lysyl-[protein] + tRNA(Leu) + H(+). The enzyme catalyses N-terminal L-arginyl-[protein] + L-leucyl-tRNA(Leu) = N-terminal L-leucyl-L-arginyl-[protein] + tRNA(Leu) + H(+). The catalysed reaction is L-phenylalanyl-tRNA(Phe) + an N-terminal L-alpha-aminoacyl-[protein] = an N-terminal L-phenylalanyl-L-alpha-aminoacyl-[protein] + tRNA(Phe). In terms of biological role, functions in the N-end rule pathway of protein degradation where it conjugates Leu, Phe and, less efficiently, Met from aminoacyl-tRNAs to the N-termini of proteins containing an N-terminal arginine or lysine. The chain is Leucyl/phenylalanyl-tRNA--protein transferase from Desulfotalea psychrophila (strain LSv54 / DSM 12343).